The following is a 477-amino-acid chain: Probable glycine dehydrogenase (decarboxylating) subunit 2 (477 aa).

An N6-(pyridoxal phosphate)lysine modification is found at Lys264.

It belongs to the GcvP family. C-terminal subunit subfamily. As to quaternary structure, the glycine cleavage system is composed of four proteins: P, T, L and H. In this organism, the P 'protein' is a heterodimer of two subunits. Pyridoxal 5'-phosphate is required as a cofactor.

It carries out the reaction N(6)-[(R)-lipoyl]-L-lysyl-[glycine-cleavage complex H protein] + glycine + H(+) = N(6)-[(R)-S(8)-aminomethyldihydrolipoyl]-L-lysyl-[glycine-cleavage complex H protein] + CO2. Functionally, the glycine cleavage system catalyzes the degradation of glycine. The P protein binds the alpha-amino group of glycine through its pyridoxal phosphate cofactor; CO(2) is released and the remaining methylamine moiety is then transferred to the lipoamide cofactor of the H protein. This chain is Probable glycine dehydrogenase (decarboxylating) subunit 2, found in Fervidobacterium nodosum (strain ATCC 35602 / DSM 5306 / Rt17-B1).